The chain runs to 501 residues: Microtubule-associated protein mmb1 (501 aa).

3 stretches are compositionally biased toward polar residues: residues 61-95, 103-122, and 132-168; these read NISS…TNNV, RNPS…SNNA, and HENS…SSNA. Disordered stretches follow at residues 61–274, 328–381, and 478–501; these read NISS…VKVN, VSRN…TTGN, and NQTS…NRMI. Over residues 234-252 the composition is skewed to low complexity; it reads SSVVRPPTRTSTTRPLSRV. Composition is skewed to polar residues over residues 253–274, 367–381, and 478–495; these read NVTN…VKVN, SRIQ…TTGN, and NQTS…SSPL.

Its subcellular location is the cytoplasm. The protein resides in the cytoskeleton. In terms of biological role, involved in the cell polarity process and in regulation of microtubule growth. Has a role in meiosis. Involved in microtubule dynamics. Binds to mitochondria and microtubules, attaching the tubular mitochondria to the microtubule lattice at multiple discrete interaction sites. The sequence is that of Microtubule-associated protein mmb1 from Schizosaccharomyces pombe (strain 972 / ATCC 24843) (Fission yeast).